The primary structure comprises 196 residues: ATP-dependent Clp protease proteolytic subunit (196 aa).

Serine 98 functions as the Nucleophile in the catalytic mechanism. The active site involves histidine 123.

The protein belongs to the peptidase S14 family. As to quaternary structure, fourteen ClpP subunits assemble into 2 heptameric rings which stack back to back to give a disk-like structure with a central cavity, resembling the structure of eukaryotic proteasomes.

It is found in the cytoplasm. The enzyme catalyses Hydrolysis of proteins to small peptides in the presence of ATP and magnesium. alpha-casein is the usual test substrate. In the absence of ATP, only oligopeptides shorter than five residues are hydrolyzed (such as succinyl-Leu-Tyr-|-NHMec, and Leu-Tyr-Leu-|-Tyr-Trp, in which cleavage of the -Tyr-|-Leu- and -Tyr-|-Trp bonds also occurs).. Cleaves peptides in various proteins in a process that requires ATP hydrolysis. Has a chymotrypsin-like activity. Plays a major role in the degradation of misfolded proteins. The chain is ATP-dependent Clp protease proteolytic subunit from Limosilactobacillus fermentum (strain NBRC 3956 / LMG 18251) (Lactobacillus fermentum).